The primary structure comprises 290 residues: 4-hydroxy-tetrahydrodipicolinate synthase (290 aa).

Thr44 contributes to the pyruvate binding site. Tyr132 acts as the Proton donor/acceptor in catalysis. Lys160 functions as the Schiff-base intermediate with substrate in the catalytic mechanism. Ile202 contacts pyruvate.

The protein belongs to the DapA family. Homotetramer; dimer of dimers.

The protein localises to the cytoplasm. The catalysed reaction is L-aspartate 4-semialdehyde + pyruvate = (2S,4S)-4-hydroxy-2,3,4,5-tetrahydrodipicolinate + H2O + H(+). It participates in amino-acid biosynthesis; L-lysine biosynthesis via DAP pathway; (S)-tetrahydrodipicolinate from L-aspartate: step 3/4. Catalyzes the condensation of (S)-aspartate-beta-semialdehyde [(S)-ASA] and pyruvate to 4-hydroxy-tetrahydrodipicolinate (HTPA). The chain is 4-hydroxy-tetrahydrodipicolinate synthase from Cereibacter sphaeroides (strain ATCC 17025 / ATH 2.4.3) (Rhodobacter sphaeroides).